Consider the following 177-residue polypeptide: Adenine phosphoribosyltransferase (177 aa).

Belongs to the purine/pyrimidine phosphoribosyltransferase family. In terms of assembly, homodimer.

It localises to the cytoplasm. The enzyme catalyses AMP + diphosphate = 5-phospho-alpha-D-ribose 1-diphosphate + adenine. Its pathway is purine metabolism; AMP biosynthesis via salvage pathway; AMP from adenine: step 1/1. Functionally, catalyzes a salvage reaction resulting in the formation of AMP, that is energically less costly than de novo synthesis. The protein is Adenine phosphoribosyltransferase of Chlorobium phaeobacteroides (strain BS1).